The primary structure comprises 474 residues: Cysteine--tRNA ligase (474 aa).

Cys29 lines the Zn(2+) pocket. The short motif at 31–41 (ATVQGEPHVGH) is the 'HIGH' region element. Zn(2+) is bound by residues Cys211, His236, and Glu240. The 'KMSKS' region motif lies at 267–271 (KMSKS). Lys270 is an ATP binding site.

It belongs to the class-I aminoacyl-tRNA synthetase family. As to quaternary structure, monomer. Zn(2+) is required as a cofactor.

Its subcellular location is the cytoplasm. It carries out the reaction tRNA(Cys) + L-cysteine + ATP = L-cysteinyl-tRNA(Cys) + AMP + diphosphate. The sequence is that of Cysteine--tRNA ligase from Beutenbergia cavernae (strain ATCC BAA-8 / DSM 12333 / CCUG 43141 / JCM 11478 / NBRC 16432 / NCIMB 13614 / HKI 0122).